We begin with the raw amino-acid sequence, 856 residues long: Translation initiation factor IF-2 (856 aa).

Disordered regions lie at residues 1 to 248 (MSDN…ARAR) and 254 to 273 (KRAR…QQKQ). The segment covering 22-38 (ETGQVKQSFSHGRSNTV) has biased composition (polar residues). Over residues 83–93 (APRPAPAPIPT) the composition is skewed to pro residues. Over residues 100 to 150 (LERREQQERLLREAEEARMAALEETRRREERAKAEATEEERRRAEENRRAE) the composition is skewed to basic and acidic residues. Residues 156 to 196 (AAAAAAAAATAEAETAAAAPREEAPAAAGTAEEAPRTSSST) show a composition bias toward low complexity. Positions 197-209 (MPPPRRFTPVPSP) are enriched in pro residues. Over residues 210–229 (KRPEPPRPQQRDRKGDDRRQ) the composition is skewed to basic and acidic residues. A tr-type G domain is found at 356–526 (PRPPVVTIMG…ELQAELLELK (171 aa)). Residues 365 to 372 (GHVDHGKT) are G1. Residue 365–372 (GHVDHGKT) coordinates GTP. Residues 390 to 394 (GITQH) are G2. Residues 412 to 415 (DTPG) are G3. GTP is bound by residues 412 to 416 (DTPGH) and 466 to 469 (NKMD). A G4 region spans residues 466 to 469 (NKMD). The interval 502-504 (SAL) is G5.

This sequence belongs to the TRAFAC class translation factor GTPase superfamily. Classic translation factor GTPase family. IF-2 subfamily.

The protein resides in the cytoplasm. One of the essential components for the initiation of protein synthesis. Protects formylmethionyl-tRNA from spontaneous hydrolysis and promotes its binding to the 30S ribosomal subunits. Also involved in the hydrolysis of GTP during the formation of the 70S ribosomal complex. The chain is Translation initiation factor IF-2 from Rhizorhabdus wittichii (strain DSM 6014 / CCUG 31198 / JCM 15750 / NBRC 105917 / EY 4224 / RW1) (Sphingomonas wittichii).